Here is a 491-residue protein sequence, read N- to C-terminus: MSESKDTTEVNQEVNEKASSQSTKKQINFKRSHFIIILIVTILVTAMIAVFATIGISHWTSGLNSDQRDEMKKVEQVYQTLDDEYYKDTSSEELGTAAIDGMVKKLDDPYSDYMTKKETKSFNEDVSGDFVGIGAEMQKKGNQIQITSPMKQSPAEKAGIQPKDVVTKVNGKSIKGQPLEAIVKKVRGKQGTKVTLTIERGGQAHDITIKRDKIHVKSVEYQKHGDVGVFTINKFQNSTSGELKSAIIKAHKDGIRKIVLDLRNNPGGLLDEAVKMANIFIDKNETVVQLEKGKHKEAIKASNDASKEAKDMDVSILVNKGSASASEVFTGAMKDYNKAKVYGSKTFGKGIVQTTREFEDGSLLKFTNMKWLTPKSHYIHGKGITPDKKIEEPAYQSLNVIPSNKTYQLGDDDKNVKTMKVGLNVLGYHINNHSTEFDSELEDALKSFQKKNNLDVNGTFNKSTNEKFTQQLVEKANKEDTVLNELLKKLN.

The tract at residues 1–22 (MSESKDTTEVNQEVNEKASSQS) is disordered. The span at 9–22 (EVNQEVNEKASSQS) shows a compositional bias: polar residues. The chain crosses the membrane as a helical span at residues 34 to 54 (FIIILIVTILVTAMIAVFATI). One can recognise a PDZ domain in the interval 119-201 (TKSFNEDVSG…TKVTLTIERG (83 aa)). Active-site charge relay system residues include Ser324, Asp335, and Lys349.

The protein belongs to the peptidase S41A family.

It is found in the cell membrane. The sequence is that of Probable CtpA-like serine protease from Staphylococcus saprophyticus subsp. saprophyticus (strain ATCC 15305 / DSM 20229 / NCIMB 8711 / NCTC 7292 / S-41).